Here is a 239-residue protein sequence, read N- to C-terminus: 1-(5-phosphoribosyl)-5-[(5-phosphoribosylamino)methylideneamino] imidazole-4-carboxamide isomerase (239 aa).

The active-site Proton acceptor is the Asp8. Residue Asp129 is the Proton donor of the active site.

It belongs to the HisA/HisF family.

The protein resides in the cytoplasm. The catalysed reaction is 1-(5-phospho-beta-D-ribosyl)-5-[(5-phospho-beta-D-ribosylamino)methylideneamino]imidazole-4-carboxamide = 5-[(5-phospho-1-deoxy-D-ribulos-1-ylimino)methylamino]-1-(5-phospho-beta-D-ribosyl)imidazole-4-carboxamide. Its pathway is amino-acid biosynthesis; L-histidine biosynthesis; L-histidine from 5-phospho-alpha-D-ribose 1-diphosphate: step 4/9. This Bacillus thuringiensis subsp. konkukian (strain 97-27) protein is 1-(5-phosphoribosyl)-5-[(5-phosphoribosylamino)methylideneamino] imidazole-4-carboxamide isomerase.